Consider the following 310-residue polypeptide: MQIEFLGTGAGSPSKQRNVSSLALRLLEERNAIWLFDCGEATQHQILHTTIRPRKVEKIFITHLHGDHIFGLPGFLSSRSFQGGDEPLTIYGPKGIKDFVQTALKVSESRLSYPLKFVELTGDGEVFKDQTFTVTARRLDHKIASFGYRVEEAAHPGELMVEKVRQAGIPSGPLYGQLKRGEVVTLPDGRTVDGHDFIGAPQPGRIVAILGDTRVTDNAVKLAKGADVLVHEATFAKNEQRLAHNYYHSTSVQAATVAKKAGAQRLLLNHISARYVGRYANELAYQVRDIFEQTRVVNDLDVIEIPFKER.

The Zn(2+) site is built by histidine 63, histidine 65, aspartate 67, histidine 68, histidine 141, aspartate 212, and histidine 270. The active-site Proton acceptor is the aspartate 67.

The protein belongs to the RNase Z family. Homodimer. The cofactor is Zn(2+).

It catalyses the reaction Endonucleolytic cleavage of RNA, removing extra 3' nucleotides from tRNA precursor, generating 3' termini of tRNAs. A 3'-hydroxy group is left at the tRNA terminus and a 5'-phosphoryl group is left at the trailer molecule.. Its function is as follows. Zinc phosphodiesterase, which displays some tRNA 3'-processing endonuclease activity. Probably involved in tRNA maturation, by removing a 3'-trailer from precursor tRNA. The chain is Ribonuclease Z from Limosilactobacillus fermentum (strain NBRC 3956 / LMG 18251) (Lactobacillus fermentum).